The sequence spans 507 residues: Glucose-6-phosphate isomerase (507 aa).

The active-site Proton donor is the E337. Active-site residues include H368 and K478.

Belongs to the GPI family.

The protein localises to the cytoplasm. It catalyses the reaction alpha-D-glucose 6-phosphate = beta-D-fructose 6-phosphate. Its pathway is carbohydrate biosynthesis; gluconeogenesis. It functions in the pathway carbohydrate degradation; glycolysis; D-glyceraldehyde 3-phosphate and glycerone phosphate from D-glucose: step 2/4. Functionally, catalyzes the reversible isomerization of glucose-6-phosphate to fructose-6-phosphate. The protein is Glucose-6-phosphate isomerase of Novosphingobium aromaticivorans (strain ATCC 700278 / DSM 12444 / CCUG 56034 / CIP 105152 / NBRC 16084 / F199).